The sequence spans 420 residues: ATP phosphoribosyltransferase regulatory subunit (420 aa).

The protein belongs to the class-II aminoacyl-tRNA synthetase family. HisZ subfamily. As to quaternary structure, heteromultimer composed of HisG and HisZ subunits.

The protein resides in the cytoplasm. The protein operates within amino-acid biosynthesis; L-histidine biosynthesis; L-histidine from 5-phospho-alpha-D-ribose 1-diphosphate: step 1/9. Functionally, required for the first step of histidine biosynthesis. May allow the feedback regulation of ATP phosphoribosyltransferase activity by histidine. In Bacillus cereus (strain AH187), this protein is ATP phosphoribosyltransferase regulatory subunit.